Here is a 617-residue protein sequence, read N- to C-terminus: Diacylglycerol O-acyltransferase 1 (617 aa).

Disordered stretches follow at residues 1 to 52 (MEPI…ETER) and 95 to 186 (RNTN…PKQE). Over residues 7–17 (SNGNKNNSMDK) the composition is skewed to polar residues. Composition is skewed to low complexity over residues 18 to 34 (QPQQ…QQQQ) and 96 to 105 (NTNNNNQNNT). A compositionally biased stretch (polar residues) spans 106-140 (SPTFSSANGKQSNLTQRKINTQIQSKQPTNNNVQP). Over residues 160–177 (QNNNGNNNNNNNNNNNNN) the composition is skewed to low complexity. 5 helical membrane passes run 217–237 (LLLI…HLLY), 254–274 (WPGV…YLIE), 306–326 (IIAF…ICTF), 399–419 (IVEA…YMLP), and 449–469 (YVWL…VAEI). An FYXDWWN motif motif is present at residues 477–483 (FYRDWWN). The next 3 membrane-spanning stretches (helical) occupy residues 520–540 (GYFM…SIPF), 545–565 (LWGF…KNLM), and 570–590 (LGNV…VLLY). His-532 is an active-site residue.

The protein belongs to the membrane-bound acyltransferase family. Sterol o-acyltransferase subfamily.

The protein resides in the endoplasmic reticulum membrane. The catalysed reaction is an acyl-CoA + a 1,2-diacyl-sn-glycerol = a triacyl-sn-glycerol + CoA. The enzyme catalyses all-trans-retinol + an acyl-CoA = an all-trans-retinyl ester + CoA. It carries out the reaction 2-(9Z-octadecenoyl)-glycerol + (9Z)-octadecenoyl-CoA = 1,2-di-(9Z-octadecenoyl)-sn-glycerol + CoA. It catalyses the reaction 1,2-di-(9Z-octadecenoyl)-sn-glycerol + (9Z)-octadecenoyl-CoA = 1,2,3-tri-(9Z-octadecenoyl)-glycerol + CoA. The catalysed reaction is all-trans-retinol + hexadecanoyl-CoA = all-trans-retinyl hexadecanoate + CoA. The enzyme catalyses 1-O-(9Z-octadecenyl)-glycerol + (9Z)-octadecenoyl-CoA = 1-O-(9Z-octadecyl)-3-(9Z-octadecenoyl)-glycerol + CoA. It carries out the reaction 1-O-(9Z-octadecyl)-3-(9Z-octadecenoyl)-glycerol + (9Z)-octadecenoyl-CoA = 1-O-(9Z-octadecenyl)-2,3-di-(9Z-octadecenoyl)glycerol + CoA. It catalyses the reaction 1-(9Z-octadecenoyl)-glycerol + (9Z)-octadecenoyl-CoA = 1,2-di-(9Z-octadecenoyl)-glycerol + CoA. The catalysed reaction is 1,2-di-(9Z-octadecenoyl)-glycerol + (9Z)-octadecenoate + H(+) = 1,2,3-tri-(9Z-octadecenoyl)-glycerol + H2O. The enzyme catalyses 1-octadecanoyl-2-(5Z,8Z,11Z,14Z-eicosatetraenoyl)-sn-glycerol + (9Z)-octadecenoyl-CoA = 1-octadecanoyl-2-(5Z,8Z,11Z,14Z)-eicosatetraenoyl-3-(9Z)-octadecenoyl-sn-glycerol + CoA. It carries out the reaction hexadecane-1,2-diol + 2 hexadecanoyl-CoA = 1,2-O,O-dihexadecanoyl-1,2-hexadecanediol + 2 CoA. It catalyses the reaction hexadecane-1,2-diol + hexadecanoyl-CoA = 2-hydroxyhexadecyl hexadecanoate + CoA. The catalysed reaction is 2-(9Z-octadecenoyl)-glycerol + hexadecanoyl-CoA = 1-hexadecanoyl-2-(9Z-octadecenoyl)-sn-glycerol + CoA. The enzyme catalyses 1,2-di-(9Z-octadecenoyl)-sn-glycerol + hexadecanoyl-CoA = 1,2-di-(9Z)-octadecenoyl-3-hexadecanoyl-sn-glycerol + CoA. It carries out the reaction hexadecan-1-ol + hexadecanoyl-CoA = hexadecanyl hexadecanoate + CoA. It catalyses the reaction 13-cis-retinol + hexadecanoyl-CoA = 13-cis-retinyl hexadecanoate + CoA. The catalysed reaction is 1,3-di-(9Z-octadecenoyl)-glycerol + (9Z)-octadecenoyl-CoA = 1,2,3-tri-(9Z-octadecenoyl)-glycerol + CoA. The enzyme catalyses 2,3-di-(9Z)-octadecenoyl-sn-glycerol + (9Z)-octadecenoyl-CoA = 1,2,3-tri-(9Z-octadecenoyl)-glycerol + CoA. Its pathway is lipid metabolism; glycerolipid metabolism. Catalyzes the terminal and only committed step in triacylglycerol synthesis by using diacylglycerol and fatty acyl CoA as substrates. This chain is Diacylglycerol O-acyltransferase 1 (dgat1), found in Dictyostelium discoideum (Social amoeba).